We begin with the raw amino-acid sequence, 419 residues long: UDP-N-acetylglucosamine 1-carboxyvinyltransferase (419 aa).

22-23 (KN) is a phosphoenolpyruvate binding site. UDP-N-acetyl-alpha-D-glucosamine is bound at residue R91. Catalysis depends on C115, which acts as the Proton donor. C115 bears the 2-(S-cysteinyl)pyruvic acid O-phosphothioketal mark. UDP-N-acetyl-alpha-D-glucosamine is bound by residues 120–124 (RPVDL), 160–163 (KVSV), D305, and V327.

Belongs to the EPSP synthase family. MurA subfamily.

The protein localises to the cytoplasm. The catalysed reaction is phosphoenolpyruvate + UDP-N-acetyl-alpha-D-glucosamine = UDP-N-acetyl-3-O-(1-carboxyvinyl)-alpha-D-glucosamine + phosphate. The protein operates within cell wall biogenesis; peptidoglycan biosynthesis. Its function is as follows. Cell wall formation. Adds enolpyruvyl to UDP-N-acetylglucosamine. The polypeptide is UDP-N-acetylglucosamine 1-carboxyvinyltransferase (Escherichia coli (strain K12 / MC4100 / BW2952)).